A 284-amino-acid polypeptide reads, in one-letter code: tRNA uridine(34) hydroxylase (284 aa).

A Rhodanese domain is found at 132-226 (TGRPVVMLDT…YFEEVGGAHY (95 aa)). Residue Cys-186 is the Cysteine persulfide intermediate of the active site.

The protein belongs to the TrhO family.

It carries out the reaction uridine(34) in tRNA + AH2 + O2 = 5-hydroxyuridine(34) in tRNA + A + H2O. Catalyzes oxygen-dependent 5-hydroxyuridine (ho5U) modification at position 34 in tRNAs. In Burkholderia cenocepacia (strain ATCC BAA-245 / DSM 16553 / LMG 16656 / NCTC 13227 / J2315 / CF5610) (Burkholderia cepacia (strain J2315)), this protein is tRNA uridine(34) hydroxylase.